The following is a 386-amino-acid chain: Diaminopimelate decarboxylase (386 aa).

An N6-(pyridoxal phosphate)lysine modification is found at Lys49. Residues Gly228 and 266 to 269 (ELGR) each bind pyridoxal 5'-phosphate. The substrate site is built by Arg269, Arg305, Tyr309, Glu335, and Tyr363. Tyr363 lines the pyridoxal 5'-phosphate pocket.

This sequence belongs to the Orn/Lys/Arg decarboxylase class-II family. LysA subfamily. In terms of assembly, homodimer. Requires pyridoxal 5'-phosphate as cofactor.

It carries out the reaction meso-2,6-diaminopimelate + H(+) = L-lysine + CO2. It participates in amino-acid biosynthesis; L-lysine biosynthesis via DAP pathway; L-lysine from DL-2,6-diaminopimelate: step 1/1. Functionally, specifically catalyzes the decarboxylation of meso-diaminopimelate (meso-DAP) to L-lysine. The chain is Diaminopimelate decarboxylase from Bacteroides thetaiotaomicron (strain ATCC 29148 / DSM 2079 / JCM 5827 / CCUG 10774 / NCTC 10582 / VPI-5482 / E50).